We begin with the raw amino-acid sequence, 424 residues long: CinA-like protein (424 aa).

The protein belongs to the CinA family.

In Prochlorococcus marinus (strain MIT 9215), this protein is CinA-like protein.